Consider the following 187-residue polypeptide: Aminodeoxychorismate synthase component 2 (187 aa).

Positions 1–187 (MILLIDNYDS…HQLLANFLHR (187 aa)) constitute a Glutamine amidotransferase type-1 domain. Catalysis depends on residues C79, H168, and E170.

As to quaternary structure, monomer. Heterodimer consisting of two non-identical subunits: a glutamine amidotransferase subunit (PabA) and a aminodeoxychorismate synthase subunit (PabB).

It catalyses the reaction chorismate + L-glutamine = 4-amino-4-deoxychorismate + L-glutamate. It participates in cofactor biosynthesis; tetrahydrofolate biosynthesis; 4-aminobenzoate from chorismate: step 1/2. Inhibited by 6-diazo-5-oxo-L-norleucine (DON). The inhibition is competitive with glutamine, but uncompetitive with chorismate. In terms of biological role, part of a heterodimeric complex that catalyzes the two-step biosynthesis of 4-amino-4-deoxychorismate (ADC), a precursor of p-aminobenzoate (PABA) and tetrahydrofolate. In the first step, a glutamine amidotransferase (PabA) generates ammonia as a substrate that, along with chorismate, is used in the second step, catalyzed by aminodeoxychorismate synthase (PabB) to produce ADC. PabA converts glutamine into glutamate only in the presence of stoichiometric amounts of PabB. This is Aminodeoxychorismate synthase component 2 from Escherichia coli (strain K12).